Reading from the N-terminus, the 372-residue chain is Glutamate 5-kinase (372 aa).

Position 9 (Lys-9) interacts with ATP. Substrate contacts are provided by Ser-49, Asp-136, and Asn-148. Residues 168–169 (TD) and 210–216 (TGGMKSK) contribute to the ATP site. The 78-residue stretch at 276-353 (AGSIEIDSGA…EEALSLTKRS (78 aa)) folds into the PUA domain.

The protein belongs to the glutamate 5-kinase family.

The protein resides in the cytoplasm. The enzyme catalyses L-glutamate + ATP = L-glutamyl 5-phosphate + ADP. The protein operates within amino-acid biosynthesis; L-proline biosynthesis; L-glutamate 5-semialdehyde from L-glutamate: step 1/2. In terms of biological role, catalyzes the transfer of a phosphate group to glutamate to form L-glutamate 5-phosphate. This is Glutamate 5-kinase from Shouchella clausii (strain KSM-K16) (Alkalihalobacillus clausii).